The chain runs to 1300 residues: uncharacterized protein (1300 aa).

The interval 1 to 1205 is disordered; sequence MVLLRSGLGT…GKTLGLDPLY (1205 aa). Positions 51 to 69 are enriched in basic residues; the sequence is GRKRKKGPKKSGGKKKKRK. Over residues 73–143 the composition is skewed to gly residues; the sequence is EGPGGGEGPG…GPGGGEGPGG (71 aa). A compositionally biased stretch (basic residues) spans 145–165; it reads SRKRKRGDGSKKHGGKKKKKT. Residues 237 to 246 are compositionally biased toward low complexity; sequence PDGPGAQEGP. The span at 250-270 shows a compositional bias: acidic residues; that stretch reads EGPEGDEGPEGPEGPEGEGPE. Over residues 280–289 the composition is skewed to low complexity; it reads PDGPGAQEGP. Composition is skewed to acidic residues over residues 295 to 343 and 357 to 417; these read PDED…DSPD and PDED…EGDS. Low complexity predominate over residues 418–427; the sequence is PDGPGAQEGP. Acidic residues-rich tracts occupy residues 431-469, 477-494, 517-558, and 581-630; these read EGPE…PEGE, PEGE…EGPE, EGPE…EGPE, and EGPE…EGDS. Positions 674-686 are enriched in gly residues; sequence SGPGSSEGEGPSG. Acidic residues-rich tracts occupy residues 713–726, 736–749, 759–772, and 820–883; these read PDED…DGTE, PDED…EGTE, and SDDE…EEEV. A compositionally biased stretch (basic and acidic residues) spans 903–917; that stretch reads GEEKGEGEKGKGREE. Gly residues-rich tracts occupy residues 922–1010 and 1021–1031; these read GGEG…GEGG and GGEGGEGGEGG. A compositionally biased stretch (basic residues) spans 1183 to 1195; that stretch reads RPPKHHPQTKRAQ.

This is an uncharacterized protein from Connochaetes taurinus (Blue wildebeest).